The sequence spans 381 residues: L-lactate dehydrogenase (381 aa).

The FMN hydroxy acid dehydrogenase domain occupies 1-380; it reads MIISASTDYR…SADSLVRELG (380 aa). Residue tyrosine 24 participates in substrate binding. Residues serine 106 and glutamine 127 each coordinate FMN. Residue tyrosine 129 participates in substrate binding. Residue threonine 155 coordinates FMN. Arginine 164 contacts substrate. An FMN-binding site is contributed by lysine 251. Catalysis depends on histidine 275, which acts as the Proton acceptor. Residue arginine 278 coordinates substrate. Residue 306–330 coordinates FMN; sequence DSGIRTGLDVVRMIALGADSVLLGR.

This sequence belongs to the FMN-dependent alpha-hydroxy acid dehydrogenase family. Homotetramer. FMN serves as cofactor.

The protein localises to the cell inner membrane. The catalysed reaction is (S)-lactate + A = pyruvate + AH2. Functionally, catalyzes the conversion of L-lactate to pyruvate. Is coupled to the respiratory chain. The sequence is that of L-lactate dehydrogenase from Pseudomonas aeruginosa (strain LESB58).